A 233-amino-acid polypeptide reads, in one-letter code: Lipoprotein-releasing system ATP-binding protein LolD (233 aa).

Positions leucine 6–glutamate 233 constitute an ABC transporter domain. Glycine 42 to serine 49 serves as a coordination point for ATP.

Belongs to the ABC transporter superfamily. Lipoprotein translocase (TC 3.A.1.125) family. As to quaternary structure, the complex is composed of two ATP-binding proteins (LolD) and two transmembrane proteins (LolC and LolE).

It is found in the cell inner membrane. Part of the ABC transporter complex LolCDE involved in the translocation of mature outer membrane-directed lipoproteins, from the inner membrane to the periplasmic chaperone, LolA. Responsible for the formation of the LolA-lipoprotein complex in an ATP-dependent manner. The protein is Lipoprotein-releasing system ATP-binding protein LolD of Shigella boydii serotype 4 (strain Sb227).